The primary structure comprises 257 residues: S-methyl-5'-thioadenosine phosphorylase (257 aa).

Phosphate contacts are provided by residues Ser10 and 50–51; that span reads RH. Substrate is bound at residue Met180. Thr181 contacts phosphate. 204–206 contacts substrate; that stretch reads DYD.

The protein belongs to the PNP/MTAP phosphorylase family. MTAP subfamily. Homohexamer. Dimer of a homotrimer.

It carries out the reaction S-methyl-5'-thioadenosine + phosphate = 5-(methylsulfanyl)-alpha-D-ribose 1-phosphate + adenine. It participates in amino-acid biosynthesis; L-methionine biosynthesis via salvage pathway; S-methyl-5-thio-alpha-D-ribose 1-phosphate from S-methyl-5'-thioadenosine (phosphorylase route): step 1/1. Functionally, catalyzes the reversible phosphorylation of S-methyl-5'-thioadenosine (MTA) to adenine and 5-methylthioribose-1-phosphate. Involved in the breakdown of MTA, a major by-product of polyamine biosynthesis. Responsible for the first step in the methionine salvage pathway after MTA has been generated from S-adenosylmethionine. Has broad substrate specificity with 6-aminopurine nucleosides as preferred substrates. This Pyrococcus abyssi (strain GE5 / Orsay) protein is S-methyl-5'-thioadenosine phosphorylase (mntP).